The primary structure comprises 335 residues: DNA polymerase beta (335 aa).

Residue lysine 41 forms a Glycyl lysine isopeptide (Lys-Gly) (interchain with G-Cter in ubiquitin) linkage. Lysine 60 contributes to the K(+) binding site. A Na(+)-binding site is contributed by lysine 60. Lysine 61 is covalently cross-linked (Glycyl lysine isopeptide (Lys-Gly) (interchain with G-Cter in ubiquitin)). Leucine 62 and valine 65 together coordinate K(+). Positions 62 and 65 each coordinate Na(+). The active-site Nucleophile; Schiff-base intermediate with DNA; for 5'-dRP lyase activity is lysine 72. An N6-acetyllysine modification is found at lysine 72. Lysine 81 is covalently cross-linked (Glycyl lysine isopeptide (Lys-Gly) (interchain with G-Cter in ubiquitin)). The residue at position 83 (arginine 83) is an Omega-N-methylarginine; by PRMT6. Residues threonine 101, valine 103, and isoleucine 106 each coordinate K(+). Positions 101, 103, and 106 each coordinate Na(+). Arginine 149 lines the a 2'-deoxyribonucleoside 5'-triphosphate pocket. Arginine 152 is subject to Omega-N-methylarginine; by PRMT6. Serine 180, arginine 183, glycine 189, and aspartate 190 together coordinate a 2'-deoxyribonucleoside 5'-triphosphate. Residues 183 to 192 (RGAESSGDMD) are DNA-binding. 3 residues coordinate Mg(2+): aspartate 190, aspartate 192, and aspartate 256.

It belongs to the DNA polymerase type-X family. As to quaternary structure, monomer. Binds single-stranded DNA (ssDNA). Interacts with APEX1, LIG1, LIG3, FEN1, PCNA and XRCC1. Interacts with HUWE1/ARF-BP1, STUB1/CHIP and USP47. Interacts with FAM168A. It depends on Mg(2+) as a cofactor. Methylation by PRMT6 stimulates the polymerase activity by enhancing DNA binding and processivity. In terms of processing, ubiquitinated at Lys-41, Lys-61 and Lys-81: monoubiquitinated by HUWE1/ARF-BP1. Monoubiquitinated protein is then the target of STUB1/CHIP, which catalyzes polyubiquitination from monoubiquitin, leading to degradation by the proteasome. USP47 mediates the deubiquitination of monoubiquitinated protein, preventing polyubiquitination by STUB1/CHIP and its subsequent degradation.

It localises to the nucleus. The protein localises to the cytoplasm. It carries out the reaction DNA(n) + a 2'-deoxyribonucleoside 5'-triphosphate = DNA(n+1) + diphosphate. It catalyses the reaction a 5'-end 2'-deoxyribose-2'-deoxyribonucleotide-DNA = (2E,4S)-4-hydroxypenten-2-al-5-phosphate + a 5'-end 5'-phospho-2'-deoxyribonucleoside-DNA + H(+). The enzyme catalyses 2'-deoxyribonucleotide-(2'-deoxyribose 5'-phosphate)-2'-deoxyribonucleotide-DNA = a 3'-end 2'-deoxyribonucleotide-(2,3-dehydro-2,3-deoxyribose 5'-phosphate)-DNA + a 5'-end 5'-phospho-2'-deoxyribonucleoside-DNA + H(+). Functionally, repair polymerase that plays a key role in base-excision repair. During this process, the damaged base is excised by specific DNA glycosylases, the DNA backbone is nicked at the abasic site by an apurinic/apyrimidic (AP) endonuclease, and POLB removes 5'-deoxyribose-phosphate from the preincised AP site acting as a 5'-deoxyribose-phosphate lyase (5'-dRP lyase); through its DNA polymerase activity, it adds one nucleotide to the 3' end of the arising single-nucleotide gap. Conducts 'gap-filling' DNA synthesis in a stepwise distributive fashion rather than in a processive fashion as for other DNA polymerases. It is also able to cleave sugar-phosphate bonds 3' to an intact AP site, acting as an AP lyase. This is DNA polymerase beta (POLB) from Bos taurus (Bovine).